We begin with the raw amino-acid sequence, 622 residues long: Polyamine transporter 3 (622 aa).

The segment covering 1–47 (MNRQESINSFNSDETSSLSDVESQQPQQYIPSESGSKSNMAPNQLKL) has biased composition (polar residues). The segment at 1-76 (MNRQESINSF…VPDVNAPQSS (76 aa)) is disordered. The Cytoplasmic segment spans residues 1–182 (MNRQESINSF…WPAWIRWSYT (182 aa)). At Ser-55 the chain carries Phosphoserine. A Phosphothreonine modification is found at Thr-98. Residues Ser-101 and Ser-132 each carry the phosphoserine modification. The interval 105-152 (TSTAISRTRTRQIDGASSPSSNEDALESDNNEKGKEGDSSGANDEAPD) is disordered. The helical transmembrane segment at 183 to 203 (VLLSILVICVAYGSACISGGL) threads the bilayer. Residues 204-215 (GTVEKKYHVGME) are Extracellular-facing. A helical membrane pass occupies residues 216–236 (AAILSVSLMVIGFSLGPLIWS). Topologically, residues 237-245 (PVSDLYGRR) are cytoplasmic. Residues 246 to 266 (VAYFVSMGLYVIFNIPCALAP) form a helical membrane-spanning segment. Topologically, residues 267 to 275 (NLGSLLACR) are extracellular. The helical transmembrane segment at 276-296 (FLCGVWSSSGLCLVGGSIADM) threads the bilayer. The Cytoplasmic segment spans residues 297 to 305 (FPSETRGKA). The chain crosses the membrane as a helical span at residues 306 to 326 (IAFFAFAPYVGPVVGPLVNGF). The Extracellular portion of the chain corresponds to 327–335 (ISVSTGRMD). The helical transmembrane segment at 336 to 356 (LIFWVNMAFAGVMWIISSAIP) threads the bilayer. The Cytoplasmic portion of the chain corresponds to 357–416 (ETYAPVILKRKAARLRKETGNPKIMTEQEAQGVSMGEMMRACLLRPLYFSVTEPVLVATC). Residues 417-437 (FYVCLIYSLLYAFFFAFPVIF) form a helical membrane-spanning segment. Over 438–446 (GELYGYKDN) the chain is Extracellular. A helical transmembrane segment spans residues 447–467 (LVGLMFIPIVIGALWALATTF). At 468–487 (YCENKYLQIVKQRKPTPEDR) the chain is on the cytoplasmic side. The helical transmembrane segment at 488-508 (LLGAKIGAPFAAIALWILGAT) threads the bilayer. Over 509-512 (AYKH) the chain is Extracellular. Residues 513-533 (IIWVGPASAGLAFGFGMVLIY) form a helical membrane-spanning segment. Topologically, residues 534–550 (YSLNNYIIDCYVQYASS) are cytoplasmic. Residues 551–571 (ALATKVFLRSAGGAAFPLFTI) traverse the membrane as a helical segment. At 572-583 (QMYHKLNLHWGS) the chain is on the extracellular side. The chain crosses the membrane as a helical span at residues 584–604 (WLLAFISTAMIALPFAFSYWG). At 605–622 (KGLRHKLSKKDYSIDSIE) the chain is on the cytoplasmic side.

This sequence belongs to the major facilitator superfamily. DHA1 family. Polyamines/proton antiporter (TC 2.A.1.2.16) subfamily.

It localises to the cell membrane. Its function is as follows. Cell membrane polyamine/proton antiporter, involved in the detoxification of excess polyamines in the cytoplasm. Recognizes spermine, but not spermidine. This Saccharomyces cerevisiae (strain ATCC 204508 / S288c) (Baker's yeast) protein is Polyamine transporter 3 (TPO3).